We begin with the raw amino-acid sequence, 322 residues long: Short chain dehydrogenase AOL_s00215g274 (322 aa).

NAD(+)-binding positions include 47-48 (AV), 104-106 (IAV), 197-201 (YNVSK), and 230-232 (VAT). Tyrosine 197 functions as the Proton acceptor in the catalytic mechanism.

Belongs to the short-chain dehydrogenases/reductases (SDR) family.

It participates in secondary metabolite biosynthesis; terpenoid biosynthesis. Functionally, short chain dehydrogenase; part of the gene cluster that mediates the biosynthesis of sesquiterpenyl epoxy-cyclohexenoids (SECs) such as anthrobotrisins and arthrosporols, metabolites that possess a novel hybrid carbon skeleton consisting of a polyketide-derived epoxycyclohexenol combined with a terpenoid-derived monocyclic sesquiterpenol substructure (PKS-PTS hybrid). The SEC pathway plays an important role for fungal soil colonization via decreasing fungal nematode-capturing ability. Within the pathway, the cytochrome P450 monooxygenase AOL_s00215g274 is involved in specific regional ketone reductions at C-4 of farnesyl epoxy-quinone. The pathway begins with the biosynthesis of 6-methylsalicylic acid (6-MSA), the first precursor of the polyketide-derived epoxycyclohexenol in arthrosporols, by the polyketide synthase (PKS) AOL_s00215g283 via condensation of 1 acetate and 3 malonate units. The 6-methylsalicylic acid decarboxylase AOL_s00215g281 then catalyzes the decarboxylation of 6-methylsalicylic acid to yield m-cresol. The cytochrome P450 monooxygenase AOL_s00215g282 further oxidizes m-cresol to yield toluquinol. With the assistance of the oxidoreductase AOL_s00215g277, the polyprenyl transferase AOL_s00215g276 catalyzes the farnesylation of toluquinol to produce farnesyl hydroquinone, the hybrid precursor for biosynthesis of SECs. Farnesyl hydroquinone undergoes epoxidation and then subsequent dehydrogenation to form farnesyl epoxy-quinone, the first and simplest SEC. The cytochrome P450 monooxygenase AOL_s00215g278 and the FAD-dependent monooxygenase AOL_s00215g279 might be involved in the oxygenation of the phenol moiety, most likely in the epoxy formation. The cytochrome P450 monooxygenases AOL_s00215g274 and AOL_s00215g280 are involved in specific regional ketone reductions at respectively C-4 and C-1 of farnesyl epoxy-quinone PubMed:33823587. The polypeptide is Short chain dehydrogenase AOL_s00215g274 (Arthrobotrys oligospora (strain ATCC 24927 / CBS 115.81 / DSM 1491) (Nematode-trapping fungus)).